A 634-amino-acid chain; its full sequence is Kelch-like protein 31 (634 aa).

At A2 the chain carries N,N,N-trimethylalanine. The 65-residue stretch at 73–137 (CDLVIGTKTK…AYTGKLTLSL (65 aa)) folds into the BTB domain. The 102-residue stretch at 172-273 (CMYVVNIAET…SAQDLVNYVQ (102 aa)) folds into the BACK domain. Kelch repeat units follow at residues 317–365 (VLVT…VMDG), 366–419 (FLYV…VFNG), 420–466 (LVYA…VADG), 468–513 (VLVT…TLSD), 515–565 (VYVM…ALHG), and 567–614 (AYLV…TLSM).

In terms of processing, N-terminus is methylated by METTL11A/NTM1. As to expression, strongly expressed in skeletal muscle and weakly in heart. According to PubMed:15302408, not expressed in other tissues. According to PubMed:18719355, abundantly expressed in both embryonic skeletal and heart tissues.

Functionally, transcriptional repressor in MAPK/JNK signaling pathway to regulate cellular functions. Overexpression inhibits the transcriptional activities of both the TPA-response element (TRE) and serum response element (SRE). In Homo sapiens (Human), this protein is Kelch-like protein 31 (KLHL31).